The sequence spans 338 residues: 4-hydroxy-2-oxovalerate aldolase (338 aa).

The Pyruvate carboxyltransferase domain occupies 4-254 (PRLTDTTLRD…NPGLDVLALM (251 aa)). 12 to 13 (RD) contacts substrate. Mn(2+) is bound at residue aspartate 13. Residue histidine 16 is the Proton acceptor of the active site. Substrate-binding residues include serine 166 and histidine 193. 2 residues coordinate Mn(2+): histidine 193 and histidine 195. Substrate is bound at residue tyrosine 284.

It belongs to the 4-hydroxy-2-oxovalerate aldolase family.

The catalysed reaction is (S)-4-hydroxy-2-oxopentanoate = acetaldehyde + pyruvate. The chain is 4-hydroxy-2-oxovalerate aldolase from Roseiflexus sp. (strain RS-1).